A 194-amino-acid polypeptide reads, in one-letter code: ATP-dependent Clp protease proteolytic subunit 4 (194 aa).

The active-site Nucleophile is S100. Residue H125 is part of the active site.

It belongs to the peptidase S14 family. As to quaternary structure, fourteen ClpP subunits assemble into 2 heptameric rings which stack back to back to give a disk-like structure with a central cavity, resembling the structure of eukaryotic proteasomes.

It is found in the cytoplasm. The catalysed reaction is Hydrolysis of proteins to small peptides in the presence of ATP and magnesium. alpha-casein is the usual test substrate. In the absence of ATP, only oligopeptides shorter than five residues are hydrolyzed (such as succinyl-Leu-Tyr-|-NHMec, and Leu-Tyr-Leu-|-Tyr-Trp, in which cleavage of the -Tyr-|-Leu- and -Tyr-|-Trp bonds also occurs).. In terms of biological role, cleaves peptides in various proteins in a process that requires ATP hydrolysis. Has a chymotrypsin-like activity. Plays a major role in the degradation of misfolded proteins. In Rhodococcus jostii (strain RHA1), this protein is ATP-dependent Clp protease proteolytic subunit 4.